The primary structure comprises 161 residues: Ribosome maturation factor RimP (161 aa).

This sequence belongs to the RimP family.

It localises to the cytoplasm. In terms of biological role, required for maturation of 30S ribosomal subunits. The protein is Ribosome maturation factor RimP of Janthinobacterium sp. (strain Marseille) (Minibacterium massiliensis).